A 269-amino-acid chain; its full sequence is Major pollen allergen Pha a 1 (269 aa).

Positions 1 to 29 (MMKMVCSSSSSSLLVVAALLAVFVGSAQG) are cleaved as a signal peptide. A glycan (N-linked (GlcNAc...) asparagine) is linked at Asn38. The Expansin-like EG45 domain occupies 67–173 (GGACGYKDVD…RRVKCKYPDG (107 aa)). The region spanning 187–268 (NYLALLVKYV…GWKADTHDAS (82 aa)) is the Expansin-like CBD domain.

The protein belongs to the expansin family. Expansin B subfamily.

The protein localises to the secreted. This Phalaris aquatica (Canary grass) protein is Major pollen allergen Pha a 1.